Here is a 48-residue protein sequence, read N- to C-terminus: Phosphatidylserine decarboxylase proenzyme (48 aa).

Belongs to the phosphatidylserine decarboxylase family. Type 1 subfamily. It depends on pyruvate as a cofactor.

The enzyme catalyses a 1,2-diacyl-sn-glycero-3-phospho-L-serine + H(+) = a 1,2-diacyl-sn-glycero-3-phosphoethanolamine + CO2. It functions in the pathway phospholipid metabolism; phosphatidylethanolamine biosynthesis; phosphatidylethanolamine from CDP-diacylglycerol: step 2/2. The protein is Phosphatidylserine decarboxylase proenzyme (psd) of Azotobacter vinelandii.